The primary structure comprises 539 residues: Tyrosinase (539 aa).

6 residues coordinate Cu cation: H63, H84, H93, H290, H294, and H333. Positions 82-84 (CHH) form a cross-link, 2'-(S-cysteinyl)-histidine (Cys-His).

Belongs to the tyrosinase family. Homotetramer. Requires Cu(2+) as cofactor. The N-terminus is blocked.

It carries out the reaction 2 L-dopa + O2 = 2 L-dopaquinone + 2 H2O. The catalysed reaction is L-tyrosine + O2 = L-dopaquinone + H2O. Activated by acidifying treatment at pH 3.0. In terms of biological role, this is a copper-containing oxidase that functions in the formation of pigments such as melanins and other polyphenolic compounds. This is Tyrosinase (melO) from Aspergillus oryzae (strain ATCC 42149 / RIB 40) (Yellow koji mold).